The sequence spans 57 residues: Small ribosomal subunit protein bS21 (57 aa).

The disordered stretch occupies residues 34-57; that stretch reads RKEHYIKPSVQKKNRQKNMRSKKR. The segment covering 43–57 has biased composition (basic residues); sequence VQKKNRQKNMRSKKR.

Belongs to the bacterial ribosomal protein bS21 family.

The polypeptide is Small ribosomal subunit protein bS21 (Aster yellows witches'-broom phytoplasma (strain AYWB)).